A 127-amino-acid polypeptide reads, in one-letter code: Small ribosomal subunit protein bS6 (127 aa).

A disordered region spans residues 101-127; it reads PMMKEEKARDLLQGAKADAPAEQPAAA. Residues 115–127 are compositionally biased toward low complexity; it reads AKADAPAEQPAAA.

It belongs to the bacterial ribosomal protein bS6 family.

Its function is as follows. Binds together with bS18 to 16S ribosomal RNA. This Thiobacillus denitrificans (strain ATCC 25259 / T1) protein is Small ribosomal subunit protein bS6.